The following is a 671-amino-acid chain: DNA ligase (671 aa).

NAD(+)-binding positions include 32–36, 81–82, and E113; these read DAEYD and SL. K115 functions as the N6-AMP-lysine intermediate in the catalytic mechanism. NAD(+) is bound by residues R136, E173, K290, and K314. 4 residues coordinate Zn(2+): C408, C411, C426, and C432. Residues 593–671 enclose the BRCT domain; the sequence is EIDSPFAGKT…EAEMIRLLGA (79 aa).

It belongs to the NAD-dependent DNA ligase family. LigA subfamily. It depends on Mg(2+) as a cofactor. Requires Mn(2+) as cofactor.

It carries out the reaction NAD(+) + (deoxyribonucleotide)n-3'-hydroxyl + 5'-phospho-(deoxyribonucleotide)m = (deoxyribonucleotide)n+m + AMP + beta-nicotinamide D-nucleotide.. Its function is as follows. DNA ligase that catalyzes the formation of phosphodiester linkages between 5'-phosphoryl and 3'-hydroxyl groups in double-stranded DNA using NAD as a coenzyme and as the energy source for the reaction. It is essential for DNA replication and repair of damaged DNA. The polypeptide is DNA ligase (Salmonella typhi).